A 196-amino-acid polypeptide reads, in one-letter code: MTWQNDYSRDYEVKNHMECQNRSDKYIWSPHDAYFYKGLSELIVDIDRLIYLSLEKIRKDFVFINLNTDSLTEFINRDNEWLSAVKGKQVVLIAARKSEALANYWYYNSNIRGVVYAGLSRDIRKELAYVINGRFLRKDIKKDKITDREMEIIRMTAQGMLPKSIARIENCSVKTVYTHRRNAEAKLYSKLYKLVQ.

The HTH luxR-type domain maps to 138–196 (KDIKKDKITDREMEIIRMTAQGMLPKSIARIENCSVKTVYTHRRNAEAKLYSKLYKLVQ). The H-T-H motif DNA-binding region spans 162–181 (PKSIARIENCSVKTVYTHRR).

It belongs to the EcpR/MatA family.

The protein resides in the cytoplasm. Part of the ecpRABCDE operon, which encodes the E.coli common pilus (ECP). ECP is found in both commensal and pathogenic strains and plays a dual role in early-stage biofilm development and host cell recognition. Positively regulates the expression of the ecp operon. This Escherichia coli (strain SMS-3-5 / SECEC) protein is HTH-type transcriptional regulator EcpR (ecpR).